The following is a 309-amino-acid chain: Dehydrogenase/reductase SDR family member 7B (309 aa).

The Cytoplasmic portion of the chain corresponds to methionine 1–threonine 4. Residues threonine 5–leucine 25 form a helical; Signal-anchor for type II membrane protein membrane-spanning segment. Over glutamine 26 to leucine 272 the chain is Lumenal. NAD(+) contacts are provided by serine 46 and leucine 48. Substrate is bound at residue serine 178. The NAD(+) site is built by tyrosine 191, lysine 195, and threonine 226. Catalysis depends on tyrosine 191, which acts as the Proton acceptor.

The protein belongs to the short-chain dehydrogenases/reductases (SDR) family.

The protein resides in the endoplasmic reticulum membrane. In terms of biological role, putative oxidoreductase. This chain is Dehydrogenase/reductase SDR family member 7B (dhrs7b), found in Xenopus tropicalis (Western clawed frog).